A 395-amino-acid chain; its full sequence is LIM/homeobox protein Lhx3 (395 aa).

2 LIM zinc-binding domains span residues 28–78 (CAGC…CKED) and 87–141 (CAAC…CKAD). A DNA-binding region (homeobox) is located at residues 154 to 213 (AKRPRTTITAKQLETLKNAYNNSPKPARHVREQLSSETGLDMRVVQVWFQNRRAKEKRLK). 2 disordered regions span residues 209–325 (EKRL…LQAL) and 348–395 (GGQG…HAQF). A compositionally biased stretch (polar residues) spans 257–276 (DEPSMSEMSHSNGIYSNLSE).

Its subcellular location is the nucleus. In terms of biological role, transcription factor. Defines subclasses of motoneurons that segregate into columns in the spinal cord and select distinct axon pathways. Acts in conjunction with LIM-1, ISL-1 and ISL-2. This chain is LIM/homeobox protein Lhx3 (LHX3), found in Gallus gallus (Chicken).